Reading from the N-terminus, the 442-residue chain is Inner membrane protein PPF-1, chloroplastic (442 aa).

At 1 to 108 (MAKTLISSPS…EFVLKVLKDG (108 aa)) the chain is on the lumenal side. Residues 109 to 129 (LSSVHVPYSYGFAIILLTVIV) form a helical membrane-spanning segment. The Stromal segment spans residues 130 to 183 (KAATLPLTKQQVESTLAMQNLQPKIKAIQERYAGNQERIQLETSRLYTQAGVNP). Residues 184–204 (LAGCLPTLATIPVWIGLYQAL) traverse the membrane as a helical segment. Topologically, residues 205–296 (SNVANEGLLT…QKNTLLIFKF (92 aa)) are lumenal. A helical membrane pass occupies residues 297 to 317 (LPLMIGYFSLSVPSGLTIYWF). Topologically, residues 318 to 442 (TNNVLSTAQQ…SKRSKRKPVA (125 aa)) are stromal. Disordered stretches follow at residues 350–371 (AGQA…RQLK) and 390–442 (PLAS…KPVA). Positions 358-371 (SKPEKGGERFRQLK) are enriched in basic and acidic residues. A compositionally biased stretch (polar residues) spans 414-427 (ESNTSKVSQEVQSF). Residues 431 to 442 (RRSKRSKRKPVA) are compositionally biased toward basic residues.

The protein belongs to the OXA1/ALB3/YidC (TC 2.A.9.2) family. In terms of tissue distribution, highly expressed in apical buds. Low levels of expression in leaves. Not expressed in roots, and stems.

It is found in the plastid. The protein localises to the chloroplast thylakoid membrane. Functionally, may be required for the insertion of some integral membrane proteins into the chloroplast thylakoid membrane. May play a role in inhibiting senescence. The chain is Inner membrane protein PPF-1, chloroplastic (PPF-1) from Pisum sativum (Garden pea).